The chain runs to 239 residues: Ribonuclease 3 (239 aa).

Positions 18 to 141 (YLTLEKALGY…LMAGVYLEAG (124 aa)) constitute an RNase III domain. E54 is a Mg(2+) binding site. The active site involves D58. Mg(2+) contacts are provided by S127 and E130. The active site involves E130. The DRBM domain maps to 168 to 237 (DYKTALQELT…AYQALQKLKE (70 aa)).

The protein belongs to the ribonuclease III family. Homodimer. Mg(2+) is required as a cofactor.

It is found in the cytoplasm. It carries out the reaction Endonucleolytic cleavage to 5'-phosphomonoester.. Digests double-stranded RNA. Involved in the processing of primary rRNA transcript to yield the immediate precursors to the large and small rRNAs (23S and 16S). Processes some mRNAs, and tRNAs when they are encoded in the rRNA operon. Processes pre-crRNA and tracrRNA of type II CRISPR loci if present in the organism. This chain is Ribonuclease 3, found in Helicobacter pylori (strain J99 / ATCC 700824) (Campylobacter pylori J99).